A 351-amino-acid chain; its full sequence is Alanine racemase (351 aa).

The Proton acceptor; specific for D-alanine role is filled by Lys-34. Lys-34 is modified (N6-(pyridoxal phosphate)lysine). Residue Arg-126 coordinates substrate. Tyr-248 serves as the catalytic Proton acceptor; specific for L-alanine. Met-296 serves as a coordination point for substrate.

It belongs to the alanine racemase family. Pyridoxal 5'-phosphate is required as a cofactor.

The catalysed reaction is L-alanine = D-alanine. It functions in the pathway amino-acid biosynthesis; D-alanine biosynthesis; D-alanine from L-alanine: step 1/1. Its function is as follows. Catalyzes the interconversion of L-alanine and D-alanine. May also act on other amino acids. This chain is Alanine racemase (alr), found in Deinococcus radiodurans (strain ATCC 13939 / DSM 20539 / JCM 16871 / CCUG 27074 / LMG 4051 / NBRC 15346 / NCIMB 9279 / VKM B-1422 / R1).